The sequence spans 155 residues: Endoribonuclease YbeY (155 aa).

Residues His-116, His-120, and His-126 each coordinate Zn(2+).

This sequence belongs to the endoribonuclease YbeY family. It depends on Zn(2+) as a cofactor.

The protein localises to the cytoplasm. Functionally, single strand-specific metallo-endoribonuclease involved in late-stage 70S ribosome quality control and in maturation of the 3' terminus of the 16S rRNA. The chain is Endoribonuclease YbeY from Colwellia psychrerythraea (strain 34H / ATCC BAA-681) (Vibrio psychroerythus).